Here is a 798-residue protein sequence, read N- to C-terminus: ATP-dependent RecD2 DNA helicase (798 aa).

370–374 is a binding site for ATP; the sequence is GTGKT.

Belongs to the RecD family. RecD2 subfamily. Interacts with SSB (sbbA).

The protein localises to the cytoplasm. Its subcellular location is the nucleoid. It carries out the reaction Couples ATP hydrolysis with the unwinding of duplex DNA at the replication fork by translocating in the 5'-3' direction. This creates two antiparallel DNA single strands (ssDNA). The leading ssDNA polymer is the template for DNA polymerase III holoenzyme which synthesizes a continuous strand.. It catalyses the reaction ATP + H2O = ADP + phosphate + H(+). In vivo may favor replication restart by preventing RecA from binding to blocked replication forks, avoiding unnecessary recombination during replication restart. Acts as a negative modulator of the RecA-ssDNA filament, may dissasemble RecA threads, can act as both a positive and negative regulator of strand exchange. Probably stabilizes or aids normal replication fork progression, is important for survival after treatment with DNA-damaging agents that can result in replication fork stress. Overcomes the inhibition of replication restart by RecA/RecO, probably by displacing RecA. Increasing levels inhibit PriA-dependent DNA replication initiation (but have little effect on ongoing replication) in vitro; may act by disturbing SsbA assembly. Probably has a role in recombinational DNA repair. Does not seem to contribute to mismatch repair. Has 5'-3' helicase activity that is probably ATP-dependent. The polypeptide is ATP-dependent RecD2 DNA helicase (Bacillus subtilis (strain 168)).